Consider the following 256-residue polypeptide: Type III pantothenate kinase (256 aa).

Asp6–Val13 contacts ATP. Gly107 to Arg110 provides a ligand contact to substrate. The active-site Proton acceptor is Asp109. Residue Asp129 participates in K(+) binding. Thr132 provides a ligand contact to ATP. Thr184 contributes to the substrate binding site.

Belongs to the type III pantothenate kinase family. In terms of assembly, homodimer. Requires NH4(+) as cofactor. K(+) serves as cofactor.

It localises to the cytoplasm. The enzyme catalyses (R)-pantothenate + ATP = (R)-4'-phosphopantothenate + ADP + H(+). Its pathway is cofactor biosynthesis; coenzyme A biosynthesis; CoA from (R)-pantothenate: step 1/5. Its function is as follows. Catalyzes the phosphorylation of pantothenate (Pan), the first step in CoA biosynthesis. The sequence is that of Type III pantothenate kinase from Pelotomaculum thermopropionicum (strain DSM 13744 / JCM 10971 / SI).